The following is a 638-amino-acid chain: NBPF family member NBPF4 (638 aa).

2 coiled-coil regions span residues 10–43 (SERAEMNILEINQELRSQLAESNQQFRDLKEKFL) and 69–115 (DSVL…KLRE). Positions 157 to 285 (HLVHKLSPEN…VPPRHHDKSN (129 aa)) are disordered. Positions 165-179 (ENDEDEDEDEDDKDE) are enriched in acidic residues. Positions 174–261 (EDDKDEEVEK…EEEEALNIPP (88 aa)) constitute an Olduvai 1 domain. The span at 192–202 (EVQKTEEKEVP) shows a compositional bias: basic and acidic residues. Over residues 214 to 226 (SNSHNPSNSNQPH) the composition is skewed to low complexity. Composition is skewed to basic and acidic residues over residues 232-251 (TFKEHEVDSALVVESEHPHD) and 264-273 (QNDHEEEEGK). 2 consecutive Olduvai domains span residues 326–399 (EKQS…ALVD) and 400–503 (KIKK…SQAQ). The segment at 562–584 (GMKNPPQLEDDALEGSASNTQGR) is disordered.

This sequence belongs to the NBPF family. In terms of tissue distribution, expressed in testis.

Its subcellular location is the cytoplasm. The chain is NBPF family member NBPF4 from Homo sapiens (Human).